Here is a 456-residue protein sequence, read N- to C-terminus: Membrane-bound lytic murein transglycosylase F (456 aa).

The signal sequence occupies residues 1–22 (MKTWPSRAVSLLLLALALPVGC). Residues 23-267 (SEPPPPVRDP…ALDETWFGRF (245 aa)) are non-LT domain. Residues 268–456 (GDYDYVDVAR…YRALLAAQDL (189 aa)) form an LT domain region. Glutamate 314 is a catalytic residue.

The protein in the N-terminal section; belongs to the bacterial solute-binding protein 3 family. This sequence in the C-terminal section; belongs to the transglycosylase Slt family.

The protein resides in the cell outer membrane. The catalysed reaction is Exolytic cleavage of the (1-&gt;4)-beta-glycosidic linkage between N-acetylmuramic acid (MurNAc) and N-acetylglucosamine (GlcNAc) residues in peptidoglycan, from either the reducing or the non-reducing ends of the peptidoglycan chains, with concomitant formation of a 1,6-anhydrobond in the MurNAc residue.. In terms of biological role, murein-degrading enzyme that degrades murein glycan strands and insoluble, high-molecular weight murein sacculi, with the concomitant formation of a 1,6-anhydromuramoyl product. Lytic transglycosylases (LTs) play an integral role in the metabolism of the peptidoglycan (PG) sacculus. Their lytic action creates space within the PG sacculus to allow for its expansion as well as for the insertion of various structures such as secretion systems and flagella. The sequence is that of Membrane-bound lytic murein transglycosylase F from Maricaulis maris (strain MCS10) (Caulobacter maris).